The primary structure comprises 143 residues: Hemoglobin subunit alpha-A (143 aa).

The 142-residue stretch at 2-143 (SLSGKDKSVV…LALALAERYR (142 aa)) folds into the Globin domain. Position 60 (H60) interacts with O2. H89 contacts heme b.

Belongs to the globin family. Heterotetramer of two alpha chains and two beta chains. As to expression, red blood cells.

Involved in oxygen transport from gills to the various peripheral tissues. In Seriola quinqueradiata (Five-ray yellowtail), this protein is Hemoglobin subunit alpha-A (hbaa).